The following is a 132-amino-acid chain: Large ribosomal subunit protein uL14 (132 aa).

It belongs to the universal ribosomal protein uL14 family. Part of the 50S ribosomal subunit. Forms a cluster with proteins L3 and L24e, part of which may contact the 16S rRNA in 2 intersubunit bridges.

Binds to 23S rRNA. Forms part of two intersubunit bridges in the 70S ribosome. This Methanospirillum hungatei JF-1 (strain ATCC 27890 / DSM 864 / NBRC 100397 / JF-1) protein is Large ribosomal subunit protein uL14.